The primary structure comprises 56 residues: Conotoxin Cal6.41c (56 aa).

The signal sequence occupies residues 1–23; the sequence is MSGSGAMLLGLLILVAMATSLDT. 3 cysteine pairs are disulfide-bonded: C27/C41, C33/C50, and C40/C54.

In terms of tissue distribution, expressed by the venom duct.

It is found in the secreted. In terms of biological role, probable neurotoxin. The polypeptide is Conotoxin Cal6.41c (Californiconus californicus (California cone)).